Consider the following 349-residue polypeptide: Succinylglutamate desuccinylase (349 aa).

Zn(2+) contacts are provided by His70, Glu73, and His166. Residue Glu229 is part of the active site.

Belongs to the AspA/AstE family. Succinylglutamate desuccinylase subfamily. The cofactor is Zn(2+).

The catalysed reaction is N-succinyl-L-glutamate + H2O = L-glutamate + succinate. It functions in the pathway amino-acid degradation; L-arginine degradation via AST pathway; L-glutamate and succinate from L-arginine: step 5/5. Transforms N(2)-succinylglutamate into succinate and glutamate. In Burkholderia pseudomallei (strain 1710b), this protein is Succinylglutamate desuccinylase.